The following is a 455-amino-acid chain: Ribulose bisphosphate carboxylase large chain (455 aa).

Position 5 is an N6,N6,N6-trimethyllysine (lysine 5). The substrate site is built by asparagine 114 and threonine 164. Catalysis depends on lysine 166, which acts as the Proton acceptor. Substrate is bound at residue lysine 168. Mg(2+) contacts are provided by lysine 192, aspartate 194, and glutamate 195. Lysine 192 carries the post-translational modification N6-carboxylysine. Histidine 285 functions as the Proton acceptor in the catalytic mechanism. Positions 286, 318, and 370 each coordinate substrate.

Belongs to the RuBisCO large chain family. Type I subfamily. As to quaternary structure, heterohexadecamer of 8 large chains and 8 small chains; disulfide-linked. The disulfide link is formed within the large subunit homodimers. Requires Mg(2+) as cofactor. Post-translationally, the disulfide bond which can form in the large chain dimeric partners within the hexadecamer appears to be associated with oxidative stress and protein turnover.

The protein resides in the plastid. It localises to the chloroplast. The catalysed reaction is 2 (2R)-3-phosphoglycerate + 2 H(+) = D-ribulose 1,5-bisphosphate + CO2 + H2O. It carries out the reaction D-ribulose 1,5-bisphosphate + O2 = 2-phosphoglycolate + (2R)-3-phosphoglycerate + 2 H(+). Functionally, ruBisCO catalyzes two reactions: the carboxylation of D-ribulose 1,5-bisphosphate, the primary event in carbon dioxide fixation, as well as the oxidative fragmentation of the pentose substrate in the photorespiration process. Both reactions occur simultaneously and in competition at the same active site. This chain is Ribulose bisphosphate carboxylase large chain, found in Lupinus microcarpus (Chick lupine).